We begin with the raw amino-acid sequence, 308 residues long: uncharacterized protein (308 aa).

The ABC transporter domain maps to L5–L236. G38 to S45 lines the ATP pocket.

It belongs to the ABC transporter superfamily.

This is an uncharacterized protein from Escherichia coli (strain K12).